Consider the following 234-residue polypeptide: DEAD-box ATP-dependent RNA helicase 3 (234 aa).

Residues 120–148 (LAVSRLGLPQKLVETLEKRGITKLFPIQR) carry the Q motif motif. Residues 151-234 (LVPALEGRDI…RTVCVYGGVS (84 aa)) form the Helicase ATP-binding domain. 164–171 (AKTGTGKT) is an ATP binding site.

It belongs to the DEAD box helicase family. DDX21/DDX50 subfamily.

The polypeptide is DEAD-box ATP-dependent RNA helicase 3 (Helianthus annuus (Common sunflower)).